A 140-amino-acid chain; its full sequence is Transcription antitermination protein NusB (140 aa).

The protein belongs to the NusB family.

Its function is as follows. Involved in transcription antitermination. Required for transcription of ribosomal RNA (rRNA) genes. Binds specifically to the boxA antiterminator sequence of the ribosomal RNA (rrn) operons. The chain is Transcription antitermination protein NusB from Streptococcus pneumoniae (strain JJA).